A 467-amino-acid chain; its full sequence is Calcium-binding protein P (467 aa).

Pro residues-rich tracts occupy residues 1-10 and 45-62; these read MQNPQNPPPA and QYPP…PPYP. The tract at residues 1–311 is disordered; the sequence is MQNPQNPPPA…GAYPGQPPMG (311 aa). The XYPPX signature appears at 45–49; the sequence is QYPPQ. A compositionally biased stretch (low complexity) spans 63 to 74; the sequence is GTQQPGAPGAPG. 17 consecutive short sequence motifs (XYPPX) follow at residues 75 to 79, 83 to 87, 94 to 98, 104 to 108, 115 to 119, 125 to 129, 136 to 140, 146 to 150, 157 to 161, 165 to 169, 176 to 180, 187 to 191, 221 to 225, 238 to 242, 247 to 251, 256 to 260, and 275 to 279; these read QYPPQ, GYPPQ, AYPPQ, and GVPPQ. Composition is skewed to pro residues over residues 75–109 and 118–131; these read QYPP…PPQQ and PQQP…PQQP. Over residues 132–145 the composition is skewed to low complexity; it reads GAPGQYPPQQGQPG. Low complexity-rich tracts occupy residues 153 to 193 and 215 to 246; these read GQPG…PQQG and AYPG…GQPG. A compositionally biased stretch (low complexity) spans 253–311; it reads QPGAYPPQQQQVAYPGQQPPMGAYPPQQGAYPGQQGAYPGQQGAYPGQQGAYPGQPPMG. 2 EF-hand domains span residues 399–434 and 435–467; these read QKMM…LGYY and FSKG…WSMQ. Ca(2+) contacts are provided by Asp412, Asn414, Ser416, Thr418, and Glu423.

This Dictyostelium discoideum (Social amoeba) protein is Calcium-binding protein P (cbpP).